Consider the following 566-residue polypeptide: MARKQNRNSKELGLAPLADDTSHAGPPGPGRALLECDHLRSGLPDGRRRKDWSCSLLVASLAGAFGSSFLYGYNLSVVNAPTPYIKAFYNESWERRHGRPIDPDTLTLLWSVTVSIFAIGGLVGTLMVKMIGKVLGRKHTLLANNGFAISAALLMACSLQAGAFEMLIVGRFIMGIDGGIALSVLPMYLSEISPKEIRGSLGQVTAIFICIGVFTGQLLGLPELLGKESTWPYLFGVIVVPAVVQLLSLPFLPDSPRYLLLEKRNEARAVKAFQTFLGKADVSREVEEVAESRVQRSIRLVSVLELLRAPYVRWQVVTVIVTMACYQLCGLNAIWFYTNSIFGKAGIPPAKIPYVTLSTGGIETLAAIFSGLVIEHLGRRPLLIGGFGLMALFFGTLTVTLTLQDRAPWVPYLSIVGILAIIASFCSGPGGIPFILTGEFFQQSQRPAAFIIAGTVNWLSNFAVGLLFPFIQKSLDTYCFLVFATICMTGAIYLYFVLPETKNRTYAEISQAFSKRNKAYPPEEKIDSAVTDGKTKGRPEQVSSSTLDNYVKNRIVYMDDLTFQET.

The tract at residues Met1 to Arg31 is disordered. Residues Met1–Asp51 are Cytoplasmic-facing. Phosphoserine is present on Ser9. A helical membrane pass occupies residues Trp52–Gly72. Topologically, residues Tyr73–Thr107 are extracellular. 2 N-linked (GlcNAc...) asparagine glycosylation sites follow: Asn74 and Asn90. A helical transmembrane segment spans residues Leu108–Val128. At Lys129 to Thr140 the chain is on the cytoplasmic side. Residues Leu141 to Ala161 traverse the membrane as a helical segment. Over Gly162–Arg171 the chain is Extracellular. Residues Phe172–Ile192 form a helical membrane-spanning segment. Over Ser193 to Ser200 the chain is Cytoplasmic. Residues Leu201–Leu221 traverse the membrane as a helical segment. Over Pro222–Trp231 the chain is Extracellular. The helical transmembrane segment at Pro232–Leu252 threads the bilayer. Residues Pro253 to Val316 lie on the Cytoplasmic side of the membrane. A helical transmembrane segment spans residues Val317–Tyr337. The Extracellular segment spans residues Thr338 to Tyr354. Residues Val355–Glu375 form a helical membrane-spanning segment. The Cytoplasmic segment spans residues His376 to Pro381. The chain crosses the membrane as a helical span at residues Leu382–Thr402. Over Leu403–Ile415 the chain is Extracellular. Residues Val416–Leu436 form a helical membrane-spanning segment. Residues Thr437–Ile451 lie on the Cytoplasmic side of the membrane. The chain crosses the membrane as a helical span at residues Ile452–Gln472. Over Lys473–Tyr478 the chain is Extracellular. The chain crosses the membrane as a helical span at residues Cys479–Pro499. Residues Glu500 to Thr566 lie on the Cytoplasmic side of the membrane. Ser514 carries the phosphoserine modification. Over residues Glu524–Pro539 the composition is skewed to basic and acidic residues. A disordered region spans residues Glu524–Ser543.

Belongs to the major facilitator superfamily. Sugar transporter (TC 2.A.1.1) family.

The protein resides in the basolateral cell membrane. It localises to the apical cell membrane. The catalysed reaction is urate(out) = urate(in). Its function is as follows. High-capacity urate transporter, which may play a role in the urate reabsorption by proximal tubules. May have a residual high-affinity, low-capacity glucose and fructose transporter activity. Transports urate at rates 45- to 60-fold faster than glucose. Does not transport galactose. May mediate small uptake of adenine but not of other nucleobases. This chain is Solute carrier family 2, facilitated glucose transporter member 9, found in Pongo abelii (Sumatran orangutan).